The sequence spans 249 residues: Pleckstrin homology domain-containing family F member 2 (249 aa).

Ser16 carries the post-translational modification Phosphoserine. The PH domain maps to 35 to 131; the sequence is VLIGEGVLTK…WMNHINKCVT (97 aa). Lys44 carries the post-translational modification N6-acetyllysine. Residues 152 to 212 form an FYVE-type zinc finger; sequence DSEATVCMRC…ICDFCYDLLS (61 aa). Residues Cys158, Cys161, Cys175, Cys178, Cys183, Cys186, Cys204, and Cys207 each coordinate Zn(2+). Polar residues predominate over residues 221–233; sequence PTRSDSYSQSLKS. Positions 221-249 are disordered; the sequence is PTRSDSYSQSLKSPLNDASDDDDDDDSSD. Acidic residues predominate over residues 238–249; it reads ASDDDDDDDSSD. Residues Ser239 and Ser248 each carry the phosphoserine modification.

May interact with EEA1. In terms of tissue distribution, expressed in brain, stomach and thymus, as well as in kidney, spleen, and skeletal muscle. Also expressed in peripheral blood mononuclear cells and dendritic cells.

Its subcellular location is the early endosome membrane. The protein resides in the endoplasmic reticulum. In terms of biological role, may play a role in early endosome fusion upstream of RAB5, hence regulating receptor trafficking and fluid-phase transport. Enhances cellular sensitivity to TNF-induced apoptosis. This chain is Pleckstrin homology domain-containing family F member 2 (Plekhf2), found in Mus musculus (Mouse).